Reading from the N-terminus, the 346-residue chain is uncharacterized protein (346 aa).

Transmembrane regions (helical) follow at residues 15–35 (YLRG…LLTV), 55–75 (VEAR…YLFI), 93–113 (ILVL…EALT), 139–159 (ILLL…PLIL), 182–202 (IFTF…YCYV), 229–249 (LGVA…LLLL), 269–289 (LTNY…FHLF), and 295–315 (LQSL…SAMW).

It to E.coli YeiB, B.subtilis YxaH and B.subtilis YrkO.

It localises to the cell membrane. Involved in transport. This is an uncharacterized protein from Bacillus acidopullulyticus.